The chain runs to 131 residues: D-ribose pyranase (131 aa).

His-20 serves as the catalytic Proton donor. Substrate contacts are provided by residues Asp-28, His-98, and 120–122 (YAN).

It belongs to the RbsD / FucU family. RbsD subfamily. In terms of assembly, homodecamer.

Its subcellular location is the cytoplasm. The catalysed reaction is beta-D-ribopyranose = beta-D-ribofuranose. It functions in the pathway carbohydrate metabolism; D-ribose degradation; D-ribose 5-phosphate from beta-D-ribopyranose: step 1/2. Functionally, catalyzes the interconversion of beta-pyran and beta-furan forms of D-ribose. This chain is D-ribose pyranase, found in Bacillus mycoides (strain KBAB4) (Bacillus weihenstephanensis).